Reading from the N-terminus, the 390-residue chain is Probable purine permease 10 (390 aa).

10 helical membrane passes run 44-64 (WLRV…ATIL), 78-98 (LATV…ILSF), 117-137 (VLVY…YSIG), 140-160 (YLPV…NAFF), 169-189 (LTPI…LLAF), 204-224 (YVKG…VLSL), 241-261 (VMDM…VGLF), 287-307 (LVWT…LIFE), 312-332 (FSNA…VIIF), and 336-356 (MNGL…SYVY). The disordered stretch occupies residues 370 to 390 (EITTTESPDPPEAEESTWQSK).

Belongs to the purine permeases (TC 2.A.7.14) family.

It localises to the membrane. The sequence is that of Probable purine permease 10 (PUP10) from Arabidopsis thaliana (Mouse-ear cress).